The chain runs to 487 residues: Glycogen synthase (487 aa).

Lys19 is an ADP-alpha-D-glucose binding site.

This sequence belongs to the glycosyltransferase 1 family. Bacterial/plant glycogen synthase subfamily.

It carries out the reaction [(1-&gt;4)-alpha-D-glucosyl](n) + ADP-alpha-D-glucose = [(1-&gt;4)-alpha-D-glucosyl](n+1) + ADP + H(+). Its pathway is glycan biosynthesis; glycogen biosynthesis. In terms of biological role, synthesizes alpha-1,4-glucan chains using ADP-glucose. The sequence is that of Glycogen synthase from Moorella thermoacetica (strain ATCC 39073 / JCM 9320).